Reading from the N-terminus, the 69-residue chain is ATP synthase subunits region ORF 1 (69 aa).

This is ATP synthase subunits region ORF 1 from Fuscovulum blasticum (Rhodobacter blasticus).